The following is a 524-amino-acid chain: Cytochrome P450 4F3 (524 aa).

Residues 19 to 39 (WLLLLLAGASCLLAYILTPIY) form a helical membrane-spanning segment. C468 contributes to the heme binding site.

Belongs to the cytochrome P450 family. Heme serves as cofactor. Highest level in polymorphonuclear leukocytes and dendritic cells. Detectable in lymph nodes, spleen, bone marrow and peripheral blood. Highly expressed in ovary. Very low level in liver, kidney, and smooth muscle. Expressed in neutrophils (at protein level).

It localises to the endoplasmic reticulum membrane. The protein localises to the microsome membrane. It catalyses the reaction leukotriene B4 + reduced [NADPH--hemoprotein reductase] + O2 = 18-hydroxy-leukotriene B4 + oxidized [NADPH--hemoprotein reductase] + H2O + H(+). The catalysed reaction is leukotriene B4 + reduced [NADPH--hemoprotein reductase] + O2 = 19-hydroxy-leukotriene B4 + oxidized [NADPH--hemoprotein reductase] + H2O + H(+). The protein operates within lipid metabolism; leukotriene B4 degradation. A cytochrome P450 monooxygenase involved in the metabolism of the pro-inflammatory lipid mediator leukotriene B4 (LTB4). Hydroxylates at the omega-1 and omega-2 positions LTB4. This oxidation step leads to LTB4 inactivation, which is postulated to be a crucial part of the resolution of inflammation. Mechanistically, uses molecular oxygen inserting one oxygen atom into a substrate, and reducing the second into a water molecule, with two electrons provided by NADPH via cytochrome P450 reductase (CPR; NADPH-ferrihemoprotein reductase). This is Cytochrome P450 4F3 from Mus musculus (Mouse).